The following is a 266-amino-acid chain: Small ribosomal subunit protein eS1 (266 aa).

Residues G236–V266 form a disordered region. Over residues T244–G257 the composition is skewed to basic and acidic residues.

It belongs to the eukaryotic ribosomal protein eS1 family. Component of the small ribosomal subunit. Mature ribosomes consist of a small (40S) and a large (60S) subunit. The 40S subunit contains about 33 different proteins and 1 molecule of RNA (18S). The 60S subunit contains about 49 different proteins and 3 molecules of RNA (28S, 5.8S and 5S). Part of the small subunit (SSU) processome, composed of more than 70 proteins and the RNA chaperone small nucleolar RNA (snoRNA) U3.

It localises to the cytoplasm. It is found in the nucleus. Its subcellular location is the nucleolus. Component of the small ribosomal subunit. The ribosome is a large ribonucleoprotein complex responsible for the synthesis of proteins in the cell. Part of the small subunit (SSU) processome, first precursor of the small eukaryotic ribosomal subunit. During the assembly of the SSU processome in the nucleolus, many ribosome biogenesis factors, an RNA chaperone and ribosomal proteins associate with the nascent pre-rRNA and work in concert to generate RNA folding, modifications, rearrangements and cleavage as well as targeted degradation of pre-ribosomal RNA by the RNA exosome. May play a role during erythropoiesis. The protein is Small ribosomal subunit protein eS1 (rps3a) of Tetraodon nigroviridis (Spotted green pufferfish).